A 1038-amino-acid polypeptide reads, in one-letter code: TonB-dependent receptor P39 (1038 aa).

A signal peptide spans 1-39; it reads MFKQKLKMKPKIKRNCTFSGLAFILMLLFSSFTVNNLNA. A TonB box motif is present at residues 120-127; that stretch reads DEVVVIGY. In terms of domain architecture, TBDR plug spans 131 to 243; that stretch reads KRADVIGAVG…ANGVVLITTK (113 aa). One can recognise a TBDR beta-barrel domain in the interval 249–1038; that stretch reads FPKMTVDYIS…EIVIGLNVEF (790 aa). The TonB C-terminal box signature appears at 1021–1038; that stretch reads SLRYPNQTEIVIGLNVEF.

This sequence belongs to the TonB-dependent receptor family.

Its subcellular location is the cell outer membrane. TonB-dependent receptor probably involved in ulvan degradation. Ulvan is the main polysaccharide component of the Ulvales (green seaweed) cell wall. It is composed of disaccharide building blocks comprising 3-sulfated rhamnose (Rha3S) linked to D-glucuronic acid (GlcA), L-iduronic acid (IduA), or D-xylose (Xyl). The TonB-dependent receptor may mediate transport of ulvan oligosaccharides from the surface of the outer membrane to the periplasm for subsequent degradation. This Formosa agariphila (strain DSM 15362 / KCTC 12365 / LMG 23005 / KMM 3901 / M-2Alg 35-1) protein is TonB-dependent receptor P39.